The primary structure comprises 304 residues: Small ribosomal subunit protein uS3 (304 aa).

The 70-residue stretch at 17–86 (MDEYFAKQLS…NPQIDAQEVK (70 aa)) folds into the KH type-2 domain.

The protein belongs to the universal ribosomal protein uS3 family. Part of the 30S ribosomal subunit.

Its function is as follows. Binds the lower part of the 30S subunit head. In Methanococcoides burtonii (strain DSM 6242 / NBRC 107633 / OCM 468 / ACE-M), this protein is Small ribosomal subunit protein uS3.